We begin with the raw amino-acid sequence, 180 residues long: UPF0227 protein YcfP (180 aa).

It belongs to the UPF0227 family.

The chain is UPF0227 protein YcfP from Salmonella paratyphi A (strain ATCC 9150 / SARB42).